The sequence spans 375 residues: Neuropeptide Y receptor type 4-2 (375 aa).

At 1–39 (MNTSHLLALLLPKSPQGENRSKPLGTPYNFSEHCQDSVD) the chain is on the extracellular side. 3 N-linked (GlcNAc...) asparagine glycosylation sites follow: asparagine 2, asparagine 19, and asparagine 29. The helical transmembrane segment at 40 to 60 (VMVFIVTSYSIETVVGVLGNL) threads the bilayer. Over 61–87 (CLMCVTVRQKEKANVTNLLIANLAFSD) the chain is Cytoplasmic. A helical transmembrane segment spans residues 88–108 (FLMCLLCQPLTAVYTIMDYWI). Residues 109 to 116 (FGETLCKM) lie on the Extracellular side of the membrane. An intrachain disulfide couples cysteine 114 to cysteine 201. The chain crosses the membrane as a helical span at residues 117 to 137 (SAFIQCMSVTVSILSLVLVAL). Topologically, residues 138 to 155 (ERHQLIINPTGWKPSISQ) are cytoplasmic. The chain crosses the membrane as a helical span at residues 156–176 (AYLGIVLIWVIACVLSLPFLA). At 177 to 212 (NSILENVFHKNHSKALEFLADKVVCTESWPLAHHRT) the chain is on the extracellular side. N-linked (GlcNAc...) asparagine glycosylation is present at asparagine 187. A helical membrane pass occupies residues 213 to 233 (IYTTFLLLFQYCLPLGFILVC). At 234–263 (YARIYRRLQRQGRVFHKGTYSLRAGHMKQV) the chain is on the cytoplasmic side. The helical transmembrane segment at 264–284 (NVVLVVMVVAFAVLWLPLHVF) threads the bilayer. The Extracellular portion of the chain corresponds to 285–301 (NSLEDWHHEAIPICHGN). A helical membrane pass occupies residues 302–322 (LIFLVCHLLAMASTCVNPFIY). The Cytoplasmic portion of the chain corresponds to 323 to 375 (GFLNTNFKKEIKALVLTCQQSAPLEESEHLPLSTVHTEVSKGSLRLSGRSNPI). Cysteine 340 carries S-palmitoyl cysteine lipidation.

This sequence belongs to the G-protein coupled receptor 1 family.

Its subcellular location is the cell membrane. In terms of biological role, g protein-coupled receptor for PPY/pancreatic polypeptide/PP, NPY/neuropeptide Y and PYY/peptide YY that is negatively coupled to cAMP. The rank order of affinity for these polypeptides and their derivatives is PP, PP (2-36) and [Ile-31, Gln-34] PP &gt; [Pro-34] PYY &gt; PYY and [Leu-31, Pro-34] NPY &gt; NPY &gt; PYY (3-36) and NPY (2-36) &gt; PP (13-36) &gt; PP (31-36) &gt; NPY free acid. In Homo sapiens (Human), this protein is Neuropeptide Y receptor type 4-2.